The primary structure comprises 283 residues: MSQGYLNFPHIDPILFQIGPLAIRWYGLMYLFGFMFALWLANKRADKPNSGWTKDQVSDLLFAGFLGVVIGGRIGYVLFYNFGYFLDNPLYLFEVWTGGMSFHGGLLGVISAMLWYGYKNNRSFFTIADFVAPLVPFGLGAGRLGNFMNGELWGRVTDVPWAMVFPSGGPFPRHPSQLYEFALEGIVLFLILNWFIRKPRPLGAVSGLFLFGYGTFRFLVEYVREPDAQLGLFGDWISMGQILSLPMVIGGLLMMVWAFKRNLYATDLKNSGDKQNSSKQKAK.

A run of 7 helical transmembrane segments spans residues 21-41, 60-80, 95-115, 124-144, 176-196, 203-223, and 239-259; these read LAIR…LWLA, LLFA…VLFY, VWTG…AMLW, FFTI…AGRL, SQLY…NWFI, GAVS…VEYV, and MGQI…VWAF. R143 is a binding site for a 1,2-diacyl-sn-glycero-3-phospho-(1'-sn-glycerol).

It belongs to the Lgt family.

It is found in the cell inner membrane. The catalysed reaction is L-cysteinyl-[prolipoprotein] + a 1,2-diacyl-sn-glycero-3-phospho-(1'-sn-glycerol) = an S-1,2-diacyl-sn-glyceryl-L-cysteinyl-[prolipoprotein] + sn-glycerol 1-phosphate + H(+). Its pathway is protein modification; lipoprotein biosynthesis (diacylglyceryl transfer). In terms of biological role, catalyzes the transfer of the diacylglyceryl group from phosphatidylglycerol to the sulfhydryl group of the N-terminal cysteine of a prolipoprotein, the first step in the formation of mature lipoproteins. This is Phosphatidylglycerol--prolipoprotein diacylglyceryl transferase from Aliivibrio salmonicida (strain LFI1238) (Vibrio salmonicida (strain LFI1238)).